The sequence spans 312 residues: Pantothenate kinase (312 aa).

97–104 (GSVAVGKS) serves as a coordination point for ATP.

It belongs to the prokaryotic pantothenate kinase family.

It is found in the cytoplasm. It carries out the reaction (R)-pantothenate + ATP = (R)-4'-phosphopantothenate + ADP + H(+). It functions in the pathway cofactor biosynthesis; coenzyme A biosynthesis; CoA from (R)-pantothenate: step 1/5. In Mycobacterium leprae (strain TN), this protein is Pantothenate kinase (coaA).